A 343-amino-acid polypeptide reads, in one-letter code: GDSL esterase/lipase EXL6 (343 aa).

The N-terminal stretch at 1 to 21 is a signal peptide; that stretch reads MFRGKIFVLSLFSIYVLSSAA. An N-linked (GlcNAc...) asparagine glycan is attached at asparagine 24. Serine 36 (nucleophile) is an active-site residue. Active-site residues include aspartate 318 and histidine 321.

This sequence belongs to the 'GDSL' lipolytic enzyme family. As to expression, flower buds and pollen.

The protein localises to the secreted. It localises to the extracellular space. It is found in the extracellular matrix. Its subcellular location is the pollen coat. Functionally, required for the formation of pollen coats and male fertility. In Arabidopsis thaliana (Mouse-ear cress), this protein is GDSL esterase/lipase EXL6 (EXL6).